The following is a 284-amino-acid chain: Expansin-A17 (284 aa).

Residues 1–21 form the signal peptide; that stretch reads MASSWNNPAIFLAAALAVATA. The 115-residue stretch at 71–185 folds into the Expansin-like EG45 domain; the sequence is GGACGYVSND…RRVPCQRTGG (115 aa). One can recognise an Expansin-like CBD domain in the interval 195-279; sequence YWLLLYVMNV…WWITGLCYQG (85 aa).

The protein belongs to the expansin family. Expansin A subfamily. In terms of tissue distribution, expressed in roots.

Its subcellular location is the secreted. The protein resides in the cell wall. It is found in the membrane. Its function is as follows. May cause loosening and extension of plant cell walls by disrupting non-covalent bonding between cellulose microfibrils and matrix glucans. No enzymatic activity has been found. May be required for rapid internodal elongation in deepwater rice during submergence. This chain is Expansin-A17 (EXPA17), found in Oryza sativa subsp. japonica (Rice).